Here is a 305-residue protein sequence, read N- to C-terminus: Glycine--tRNA ligase alpha subunit (305 aa).

The protein belongs to the class-II aminoacyl-tRNA synthetase family. Tetramer of two alpha and two beta subunits.

Its subcellular location is the cytoplasm. The enzyme catalyses tRNA(Gly) + glycine + ATP = glycyl-tRNA(Gly) + AMP + diphosphate. The protein is Glycine--tRNA ligase alpha subunit of Streptococcus pneumoniae (strain Hungary19A-6).